Consider the following 187-residue polypeptide: MARHVLVVVAVLLFATAEASQCSINGLPLVRNISELPQENYGRSGLSHTTIAGSVLHGMKEIEVWLQTFAPGSRTPIHRHSCEEIFVVLKGQGILYLTPSSHSKYPGNPQEFHIFPNSTFHIPVNDVHQVWNTGEHEDLQVLVVISRPPVKVFMYDDWSMPHTAAKLKFPYYWDEECYQTTSWKDEL.

The N-terminal stretch at 1-20 is a signal peptide; sequence MARHVLVVVAVLLFATAEAS. An intrachain disulfide couples Cys-22 to Cys-177. Positions 78, 80, and 84 each coordinate Zn(2+). N-linked (GlcNAc...) asparagine glycosylation occurs at Asn-117. His-128 provides a ligand contact to Zn(2+). A Prevents secretion from ER motif is present at residues 184–187; the sequence is KDEL.

As to quaternary structure, homodimer.

The protein resides in the endoplasmic reticulum lumen. Its function is as follows. This is probably a receptor for the plant hormone auxin. This is Auxin-binding protein T85 (T85) from Nicotiana tabacum (Common tobacco).